Consider the following 354-residue polypeptide: Type II methylase M.HgiDII (354 aa).

The 342-residue stretch at 3-344 (GAVIDLFCGV…KSIKRFLEGL (342 aa)) folds into the SAM-dependent MTase C5-type domain. Cysteine 79 is a catalytic residue.

The protein belongs to the class I-like SAM-binding methyltransferase superfamily. C5-methyltransferase family.

The enzyme catalyses a 2'-deoxycytidine in DNA + S-adenosyl-L-methionine = a 5-methyl-2'-deoxycytidine in DNA + S-adenosyl-L-homocysteine + H(+). In terms of biological role, a methylase that recognizes the double-stranded sequence 5'-GTCGAC-3', methylates C-? on both strands and protects the DNA from cleavage by the HgiDII endonuclease. This chain is Type II methylase M.HgiDII, found in Herpetosiphon aurantiacus (Herpetosiphon giganteus).